Reading from the N-terminus, the 140-residue chain is ATP synthase epsilon chain (140 aa).

Belongs to the ATPase epsilon chain family. As to quaternary structure, F-type ATPases have 2 components, CF(1) - the catalytic core - and CF(0) - the membrane proton channel. CF(1) has five subunits: alpha(3), beta(3), gamma(1), delta(1), epsilon(1). CF(0) has three main subunits: a, b and c.

The protein localises to the cell inner membrane. Functionally, produces ATP from ADP in the presence of a proton gradient across the membrane. This Neisseria gonorrhoeae (strain ATCC 700825 / FA 1090) protein is ATP synthase epsilon chain.